We begin with the raw amino-acid sequence, 172 residues long: Translation initiation factor IF-3 (172 aa).

Belongs to the IF-3 family. Monomer.

It localises to the cytoplasm. IF-3 binds to the 30S ribosomal subunit and shifts the equilibrium between 70S ribosomes and their 50S and 30S subunits in favor of the free subunits, thus enhancing the availability of 30S subunits on which protein synthesis initiation begins. This chain is Translation initiation factor IF-3, found in Bartonella tribocorum (strain CIP 105476 / IBS 506).